Consider the following 118-residue polypeptide: Co-chaperonin GroES (118 aa).

Belongs to the GroES chaperonin family. As to quaternary structure, heptamer of 7 subunits arranged in a ring. Interacts with the chaperonin GroEL.

The protein resides in the cytoplasm. Its function is as follows. Together with the chaperonin GroEL, plays an essential role in assisting protein folding. The GroEL-GroES system forms a nano-cage that allows encapsulation of the non-native substrate proteins and provides a physical environment optimized to promote and accelerate protein folding. GroES binds to the apical surface of the GroEL ring, thereby capping the opening of the GroEL channel. The polypeptide is Co-chaperonin GroES (Helicobacter pylori (strain HPAG1)).